A 147-amino-acid chain; its full sequence is Peptide methionine sulfoxide reductase MsrB 2 (147 aa).

Positions 6 to 129 (TDEEVSKLTP…NSAALRFIPR (124 aa)) constitute a MsrB domain. Catalysis depends on C118, which acts as the Nucleophile.

It belongs to the MsrB Met sulfoxide reductase family.

It carries out the reaction L-methionyl-[protein] + [thioredoxin]-disulfide + H2O = L-methionyl-(R)-S-oxide-[protein] + [thioredoxin]-dithiol. The polypeptide is Peptide methionine sulfoxide reductase MsrB 2 (msrB2) (Rhizobium meliloti (strain 1021) (Ensifer meliloti)).